The chain runs to 253 residues: Oxidoreductase AOL_s00215g277 (253 aa).

Residues 181 to 203 (FFGYWLTVILGYYIGSLLGYQPF) traverse the membrane as a helical segment.

This sequence belongs to the oxidoreductase OpS7 family.

Its subcellular location is the membrane. Its pathway is secondary metabolite biosynthesis; terpenoid biosynthesis. In terms of biological role, oxidoreductase; part of the gene cluster that mediates the biosynthesis of sesquiterpenyl epoxy-cyclohexenoids (SECs) such as anthrobotrisins and arthrosporols, metabolites that possess a novel hybrid carbon skeleton consisting of a polyketide-derived epoxycyclohexenol combined with a terpenoid-derived monocyclic sesquiterpenol substructure (PKS-PTS hybrid). The SEC pathway plays an important role for fungal soil colonization via decreasing fungal nematode-capturing ability. Within the pathway, the oxidoreductase AOL_s00215g277 seems to play a role in the farnesylation step of toluquinol to produce farnesyl hydroquinone, the hybrid precursor for biosynthesis of SECs. The pathway begins with the biosynthesis of 6-methylsalicylic acid (6-MSA), the first precursor of the polyketide-derived epoxycyclohexenol in arthrosporols, by the polyketide synthase (PKS) AOL_s00215g283 via condensation of 1 acetate and 3 malonate units. The 6-methylsalicylic acid decarboxylase AOL_s00215g281 then catalyzes the decarboxylation of 6-methylsalicylic acid to yield m-cresol. The cytochrome P450 monooxygenase AOL_s00215g282 further oxidizes m-cresol to yield toluquinol. With the assistance of the oxidoreductase AOL_s00215g277, the polyprenyl transferase AOL_s00215g276 catalyzes the farnesylation of toluquinol to produce farnesyl hydroquinone, the hybrid precursor for biosynthesis of SECs. Farnesyl hydroquinone undergoes epoxidation and then subsequent dehydrogenation to form farnesyl epoxy-quinone, the first and simplest SEC. The cytochrome P450 monooxygenase AOL_s00215g278 and the FAD-dependent monooxygenase AOL_s00215g279 might be involved in the oxygenation of the phenol moiety, most likely in the epoxy formation. The cytochrome P450 monooxygenases AOL_s00215g274 and AOL_s00215g280 are involved in specific regional ketone reductions at respectively C-4 and C-1 of farnesyl epoxy-quinone PubMed:33823587. This is Oxidoreductase AOL_s00215g277 from Arthrobotrys oligospora (strain ATCC 24927 / CBS 115.81 / DSM 1491) (Nematode-trapping fungus).